Consider the following 387-residue polypeptide: Protein PHYTOCHROME KINASE SUBSTRATE 3 (387 aa).

Disordered stretches follow at residues 1–21 (MDAE…PQLL), 74–128 (HEKE…CNSQ), and 242–271 (LSTK…ASVA). Residues 12–21 (QISSYKPQLL) show a composition bias toward polar residues. The segment covering 74–83 (HEKENTHDHP) has biased composition (basic and acidic residues). Over residues 114–128 (HGTPSVRSESSCNSQ) the composition is skewed to polar residues. Over residues 242–261 (LSTKNNNHNNNGNNSSMSSN) the composition is skewed to low complexity.

The protein belongs to the PKS family.

In terms of biological role, probably involved in the phytochrome signaling pathway. The protein is Protein PHYTOCHROME KINASE SUBSTRATE 3 (PKS3) of Arabidopsis thaliana (Mouse-ear cress).